Consider the following 39-residue polypeptide: Cytochrome b559 subunit beta (39 aa).

Residues 14–30 traverse the membrane as a helical segment; sequence WLAVHGLAVPTVFFLGS. Residue H18 participates in heme binding.

The protein belongs to the PsbE/PsbF family. Heterodimer of an alpha subunit and a beta subunit. PSII is composed of 1 copy each of membrane proteins PsbA, PsbB, PsbC, PsbD, PsbE, PsbF, PsbH, PsbI, PsbJ, PsbK, PsbL, PsbM, PsbT, PsbX, PsbY, PsbZ, Psb30/Ycf12, at least 3 peripheral proteins of the oxygen-evolving complex and a large number of cofactors. It forms dimeric complexes. Heme b is required as a cofactor.

The protein resides in the plastid membrane. This b-type cytochrome is tightly associated with the reaction center of photosystem II (PSII). PSII is a light-driven water:plastoquinone oxidoreductase that uses light energy to abstract electrons from H(2)O, generating O(2) and a proton gradient subsequently used for ATP formation. It consists of a core antenna complex that captures photons, and an electron transfer chain that converts photonic excitation into a charge separation. The protein is Cytochrome b559 subunit beta of Cuscuta europaea (European dodder).